The sequence spans 348 residues: Bifunctional nitrilase/nitrile hydratase NIT4B (348 aa).

Residues 29–300 enclose the CN hydrolase domain; that stretch reads VRATVVQAST…EALISADLDL (272 aa). Glu69 (proton acceptor) is an active-site residue. Lys156 (proton donor) is an active-site residue. Cys190 functions as the Nucleophile in the catalytic mechanism.

This sequence belongs to the carbon-nitrogen hydrolase superfamily. Nitrilase family. As to expression, expressed in roots, stems, cotyledons, leaves and flowers.

The catalysed reaction is a nitrile + 2 H2O = a carboxylate + NH4(+). The enzyme catalyses 3-cyano-L-alanine + 2 H2O = L-aspartate + NH4(+). Functionally, highly specific for beta-cyano-L-alanine (Ala(CN)). Low activity with 3-phenylpropionitrile (PPN). Not associated with auxin production but may be involved in cyanide detoxification. The polypeptide is Bifunctional nitrilase/nitrile hydratase NIT4B (NIT4B) (Nicotiana tabacum (Common tobacco)).